Here is a 333-residue protein sequence, read N- to C-terminus: Adenosine deaminase (333 aa).

Zn(2+) is bound by residues His12 and His14. Substrate-binding residues include His14, Asp16, and Gly170. Residue His197 participates in Zn(2+) binding. Glu200 (proton donor) is an active-site residue. Asp278 provides a ligand contact to Zn(2+). Asp279 serves as a coordination point for substrate.

It belongs to the metallo-dependent hydrolases superfamily. Adenosine and AMP deaminases family. Adenosine deaminase subfamily. Zn(2+) is required as a cofactor.

The catalysed reaction is adenosine + H2O + H(+) = inosine + NH4(+). The enzyme catalyses 2'-deoxyadenosine + H2O + H(+) = 2'-deoxyinosine + NH4(+). In terms of biological role, catalyzes the hydrolytic deamination of adenosine and 2-deoxyadenosine. The protein is Adenosine deaminase of Escherichia coli (strain SMS-3-5 / SECEC).